The sequence spans 251 residues: Type III pantothenate kinase (251 aa).

Asp-6–Lys-13 lines the ATP pocket. Residues Tyr-93 and Gly-100 to Arg-103 contribute to the substrate site. Asp-102 acts as the Proton acceptor in catalysis. Asp-122 lines the K(+) pocket. Thr-125 is a binding site for ATP. Thr-182 contributes to the substrate binding site.

Belongs to the type III pantothenate kinase family. As to quaternary structure, homodimer. NH4(+) is required as a cofactor. It depends on K(+) as a cofactor.

The protein resides in the cytoplasm. It carries out the reaction (R)-pantothenate + ATP = (R)-4'-phosphopantothenate + ADP + H(+). It functions in the pathway cofactor biosynthesis; coenzyme A biosynthesis; CoA from (R)-pantothenate: step 1/5. Its function is as follows. Catalyzes the phosphorylation of pantothenate (Pan), the first step in CoA biosynthesis. This Azotobacter vinelandii (strain DJ / ATCC BAA-1303) protein is Type III pantothenate kinase.